Reading from the N-terminus, the 99-residue chain is Phosphoribosyl-ATP pyrophosphatase (99 aa).

The protein belongs to the PRA-PH family.

It localises to the cytoplasm. The catalysed reaction is 1-(5-phospho-beta-D-ribosyl)-ATP + H2O = 1-(5-phospho-beta-D-ribosyl)-5'-AMP + diphosphate + H(+). Its pathway is amino-acid biosynthesis; L-histidine biosynthesis; L-histidine from 5-phospho-alpha-D-ribose 1-diphosphate: step 2/9. This is Phosphoribosyl-ATP pyrophosphatase from Methanosphaerula palustris (strain ATCC BAA-1556 / DSM 19958 / E1-9c).